The chain runs to 109 residues: ATP synthase subunit c (109 aa).

Helical transmembrane passes span 42 to 62 and 88 to 108; these read YIGTGITMLAAGAVGLMQGFS and LALAEAVAIYALIVSILIIFV.

Belongs to the ATPase C chain family. F-type ATPases have 2 components, F(1) - the catalytic core - and F(0) - the membrane proton channel. F(1) has five subunits: alpha(3), beta(3), gamma(1), delta(1), epsilon(1). F(0) has three main subunits: a(1), b(2) and c(10-14). The alpha and beta chains form an alternating ring which encloses part of the gamma chain. F(1) is attached to F(0) by a central stalk formed by the gamma and epsilon chains, while a peripheral stalk is formed by the delta and b chains.

It is found in the cell membrane. Its function is as follows. F(1)F(0) ATP synthase produces ATP from ADP in the presence of a proton or sodium gradient. F-type ATPases consist of two structural domains, F(1) containing the extramembraneous catalytic core and F(0) containing the membrane proton channel, linked together by a central stalk and a peripheral stalk. During catalysis, ATP synthesis in the catalytic domain of F(1) is coupled via a rotary mechanism of the central stalk subunits to proton translocation. Key component of the F(0) channel; it plays a direct role in translocation across the membrane. A homomeric c-ring of between 10-14 subunits forms the central stalk rotor element with the F(1) delta and epsilon subunits. The polypeptide is ATP synthase subunit c (Ureaplasma parvum serovar 3 (strain ATCC 27815 / 27 / NCTC 11736)).